A 679-amino-acid chain; its full sequence is Protein hook (679 aa).

The region spanning Asn6 to Ala123 is the Calponin-homology (CH) domain. Coiled-coil stretches lie at residues Glu135–Gly437 and Gln480–Leu574.

This sequence belongs to the hook family. As to quaternary structure, homodimer. Interacts with microtubules via its N-terminus.

It localises to the cytoplasm. The protein resides in the cytoskeleton. Its subcellular location is the endosome. The protein localises to the synapse. Functionally, involved in endocytic trafficking by stabilizing organelles of the endocytic pathway. Probably acts as a cytoskeletal linker protein required to tether endosome vesicles to the cytoskeleton. Involved in modulation of endocytosis at stages required for down-regulation of membrane proteins that control synapse size. Not involved in synaptic vesicle recycling. Required in R7 cells for boss endocytosis into multivesicular bodies (MVBs). Has a role in regulating adult longevity. This is Protein hook from Drosophila yakuba (Fruit fly).